Reading from the N-terminus, the 363-residue chain is Phosphoserine aminotransferase (363 aa).

Position 46 (Arg46) interacts with L-glutamate. Residues 80 to 81 (AT), Trp106, Thr156, Asp176, and Gln199 contribute to the pyridoxal 5'-phosphate site. Lys200 bears the N6-(pyridoxal phosphate)lysine mark. 241-242 (NT) is a binding site for pyridoxal 5'-phosphate.

This sequence belongs to the class-V pyridoxal-phosphate-dependent aminotransferase family. SerC subfamily. As to quaternary structure, homodimer. Pyridoxal 5'-phosphate is required as a cofactor.

It is found in the cytoplasm. The catalysed reaction is O-phospho-L-serine + 2-oxoglutarate = 3-phosphooxypyruvate + L-glutamate. It carries out the reaction 4-(phosphooxy)-L-threonine + 2-oxoglutarate = (R)-3-hydroxy-2-oxo-4-phosphooxybutanoate + L-glutamate. The protein operates within amino-acid biosynthesis; L-serine biosynthesis; L-serine from 3-phospho-D-glycerate: step 2/3. Its pathway is cofactor biosynthesis; pyridoxine 5'-phosphate biosynthesis; pyridoxine 5'-phosphate from D-erythrose 4-phosphate: step 3/5. In terms of biological role, catalyzes the reversible conversion of 3-phosphohydroxypyruvate to phosphoserine and of 3-hydroxy-2-oxo-4-phosphonooxybutanoate to phosphohydroxythreonine. The sequence is that of Phosphoserine aminotransferase from Leptospira interrogans serogroup Icterohaemorrhagiae serovar copenhageni (strain Fiocruz L1-130).